Reading from the N-terminus, the 137-residue chain is Small ribosomal subunit protein uS12 (137 aa).

Positions 33-57 (KVQTNVSSPQKRGVATRVGTMTPKK) are disordered. 3-methylthioaspartic acid is present on D102.

Belongs to the universal ribosomal protein uS12 family. In terms of assembly, part of the 30S ribosomal subunit. Contacts proteins S8 and S17. May interact with IF1 in the 30S initiation complex.

In terms of biological role, with S4 and S5 plays an important role in translational accuracy. Functionally, interacts with and stabilizes bases of the 16S rRNA that are involved in tRNA selection in the A site and with the mRNA backbone. Located at the interface of the 30S and 50S subunits, it traverses the body of the 30S subunit contacting proteins on the other side and probably holding the rRNA structure together. The combined cluster of proteins S8, S12 and S17 appears to hold together the shoulder and platform of the 30S subunit. In Streptococcus thermophilus (strain CNRZ 1066), this protein is Small ribosomal subunit protein uS12.